Consider the following 208-residue polypeptide: FMN-dependent NADH:quinone oxidoreductase 4 (208 aa).

Belongs to the azoreductase type 1 family. As to quaternary structure, homodimer. FMN serves as cofactor.

The enzyme catalyses 2 a quinone + NADH + H(+) = 2 a 1,4-benzosemiquinone + NAD(+). It catalyses the reaction N,N-dimethyl-1,4-phenylenediamine + anthranilate + 2 NAD(+) = 2-(4-dimethylaminophenyl)diazenylbenzoate + 2 NADH + 2 H(+). Quinone reductase that provides resistance to thiol-specific stress caused by electrophilic quinones. In terms of biological role, also exhibits azoreductase activity. Catalyzes the reductive cleavage of the azo bond in aromatic azo compounds to the corresponding amines. The polypeptide is FMN-dependent NADH:quinone oxidoreductase 4 (Bacillus cereus (strain ZK / E33L)).